Consider the following 299-residue polypeptide: Junctional adhesion molecule A (299 aa).

Positions 1-27 (MGTKAQVERKLLCLFILAILLCSLALG) are cleaved as a signal peptide. 2 consecutive Ig-like V-type domains span residues 28–125 (SVTV…VKVK) and 135–228 (PTVN…NAVR). Residues 28–238 (SVTVHSSEPE…MEAVERNVGV (211 aa)) are Extracellular-facing. 2 disulfide bridges follow: C50-C109 and C153-C212. N185 is a glycosylation site (N-linked (GlcNAc...) asparagine). Residues 239–259 (IVAAVLVTLILLGILVFGIWF) traverse the membrane as a helical segment. The Cytoplasmic portion of the chain corresponds to 260-299 (AYSRGHFDRTKKGTSSKKVIYSQPSARSEGEFKQTSSFLV). Phosphoserine is present on residues S281, S284, and S287.

It belongs to the immunoglobulin superfamily. In terms of assembly, interacts with the ninth PDZ domain of MPDZ. Interacts with the first PDZ domain of PARD3. The association between PARD3 and PARD6B probably disrupts this interaction. Interacts with ITGAL (via I-domain). Interacts with CD151. As to quaternary structure, (Microbial infection) Interacts with Mammalian reovirus sigma-1 capsid protein. (Microbial infection) Interacts with Human Rotavirus strain Wa vp4 capsid protein. Post-translationally, N-glycosylated. In terms of processing, (Microbial infection) Cleaved by H.pylori virulence factor PqqE. Cleavage leads to altered tight junction functions. In terms of tissue distribution, expressed in endothelium, epithelium and leukocytes (at protein level).

It localises to the cell junction. It is found in the tight junction. The protein localises to the cell membrane. Seems to play a role in epithelial tight junction formation. Appears early in primordial forms of cell junctions and recruits PARD3. The association of the PARD6-PARD3 complex may prevent the interaction of PARD3 with JAM1, thereby preventing tight junction assembly. Plays a role in regulating monocyte transmigration involved in integrity of epithelial barrier. Ligand for integrin alpha-L/beta-2 involved in memory T-cell and neutrophil transmigration. Involved in platelet activation. Its function is as follows. (Microbial infection) Acts as a receptor for Mammalian reovirus sigma-1. In terms of biological role, (Microbial infection) Acts as a receptor for Human Rotavirus strain Wa. The chain is Junctional adhesion molecule A (F11R) from Homo sapiens (Human).